The following is a 127-amino-acid chain: Small ribosomal subunit protein uS11 (127 aa).

The protein belongs to the universal ribosomal protein uS11 family. Part of the 30S ribosomal subunit. Interacts with proteins S7 and S18. Binds to IF-3.

Functionally, located on the platform of the 30S subunit, it bridges several disparate RNA helices of the 16S rRNA. Forms part of the Shine-Dalgarno cleft in the 70S ribosome. This Ehrlichia ruminantium (strain Gardel) protein is Small ribosomal subunit protein uS11.